The chain runs to 658 residues: MRSMDRFGIWVLAILLVIQSSFGFYLPGSYPHKYEVGDYLNVKVNSLTSIETEMPFSYYSLPFCKPSEGIKDSAENLGELLMGDRIENSPYRFRMFKNESEIFLCQTDKLSADSLKLLKKRIDEMYQVNPMLDNLPAIRYTKRDGYVLRWTGYPVGIKVQDVYYVFNHLKFKVLVHKYEEAANVARVMGTGDAAEVIPTIGKKDSDVPGYMVVGFEVVPCSFAHNGESTKKLKMYERYTTPIKCDSTRVSMSVKEGQSIVFSYEVSFEESDIKWPSRWDAYLKMEGSKVHWFSILNSLMVITFLAGIVLVIFLRTVRRDLTRYEELDKEAQAQMNEELSGWKLVVGDVFRAPSNASLLCVMVGDGVQILGMAVVTILFAALGFMSPASRGTLITGMLFFYMILGIAAGYVSVRLWRTIGCGEHRGWMSVAWKAACFFPGIAFLILTTLNFLLWGSHSTGAIPFSLFVILLLLWFCISVPLTLIGGYFGAKAPHIEFPVRTNQIPREIPAQKYPSWLLVLGAGTLPFGTLFIELFFIMSSIWMGRVYYVFGFLFVVLILLVVVCAEVSLVLTYMHLCVEDYKWWWKSFFASGSVAIYIFIYSINYLVFDLKSLSGPVSATLYLGYSLFMVLAIMLATGTVGFLSSFWFVHYLFSSVKLD.

The first 23 residues, 1-23 (MRSMDRFGIWVLAILLVIQSSFG), serve as a signal peptide directing secretion. Topologically, residues 24 to 291 (FYLPGSYPHK…LKMEGSKVHW (268 aa)) are lumenal. Residues 292–312 (FSILNSLMVITFLAGIVLVIF) traverse the membrane as a helical segment. Residues 313–364 (LRTVRRDLTRYEELDKEAQAQMNEELSGWKLVVGDVFRAPSNASLLCVMVGD) lie on the Cytoplasmic side of the membrane. A helical transmembrane segment spans residues 365–385 (GVQILGMAVVTILFAALGFMS). The Lumenal segment spans residues 386–391 (PASRGT). Residues 392 to 412 (LITGMLFFYMILGIAAGYVSV) form a helical membrane-spanning segment. The Cytoplasmic segment spans residues 413 to 432 (RLWRTIGCGEHRGWMSVAWK). Residues 433-453 (AACFFPGIAFLILTTLNFLLW) traverse the membrane as a helical segment. Residues 454 to 462 (GSHSTGAIP) are Lumenal-facing. The chain crosses the membrane as a helical span at residues 463–483 (FSLFVILLLLWFCISVPLTLI). Residues 484-515 (GGYFGAKAPHIEFPVRTNQIPREIPAQKYPSW) are Cytoplasmic-facing. A helical transmembrane segment spans residues 516 to 536 (LLVLGAGTLPFGTLFIELFFI). Topologically, residues 537-547 (MSSIWMGRVYY) are lumenal. Residues 548-568 (VFGFLFVVLILLVVVCAEVSL) traverse the membrane as a helical segment. At 569–586 (VLTYMHLCVEDYKWWWKS) the chain is on the cytoplasmic side. Residues 587–607 (FFASGSVAIYIFIYSINYLVF) form a helical membrane-spanning segment. Over 608-619 (DLKSLSGPVSAT) the chain is Lumenal. The helical transmembrane segment at 620-640 (LYLGYSLFMVLAIMLATGTVG) threads the bilayer. Residues 641 to 658 (FLSSFWFVHYLFSSVKLD) lie on the Cytoplasmic side of the membrane. An Endoplasmic reticulum export signal motif is present at residues 647–652 (FVHYLF). The short motif at 656-658 (KLD) is the Golgi retention signal element.

Belongs to the nonaspanin (TM9SF) (TC 9.A.2) family.

Its subcellular location is the endosome membrane. It localises to the golgi apparatus membrane. This Arabidopsis thaliana (Mouse-ear cress) protein is Transmembrane 9 superfamily member 11.